A 909-amino-acid chain; its full sequence is Translation initiation factor IF-2 (909 aa).

The tract at residues 49–314 is disordered; that stretch reads LNREQGGSAG…GKQRKTSTLQ (266 aa). 3 stretches are compositionally biased toward basic and acidic residues: residues 99-177, 186-236, and 255-270; these read DAVE…EHKQ, IQSE…KWSS, and RAAE…GDRR. Positions 271–285 are enriched in basic residues; it reads ARGRSGKATRQKKNN. Basic and acidic residues predominate over residues 286 to 299; it reads KHSESKADREEARA. The tr-type G domain maps to 408 to 577; sequence PRAPVVTIMG…LLQAEVLELK (170 aa). The G1 stretch occupies residues 417–424; the sequence is GHVDHGKT. 417–424 contributes to the GTP binding site; it reads GHVDHGKT. The segment at 442–446 is G2; the sequence is GITQH. The segment at 463–466 is G3; the sequence is DTPG. GTP is bound by residues 463 to 467 and 517 to 520; these read DTPGH and NKID. The segment at 517-520 is G4; sequence NKID. The interval 553 to 555 is G5; the sequence is SAK.

It belongs to the TRAFAC class translation factor GTPase superfamily. Classic translation factor GTPase family. IF-2 subfamily.

The protein resides in the cytoplasm. In terms of biological role, one of the essential components for the initiation of protein synthesis. Protects formylmethionyl-tRNA from spontaneous hydrolysis and promotes its binding to the 30S ribosomal subunits. Also involved in the hydrolysis of GTP during the formation of the 70S ribosomal complex. This chain is Translation initiation factor IF-2, found in Photorhabdus laumondii subsp. laumondii (strain DSM 15139 / CIP 105565 / TT01) (Photorhabdus luminescens subsp. laumondii).